A 21-amino-acid polypeptide reads, in one-letter code: Glutathione S-transferase 1 (21 aa).

The protein belongs to the GST superfamily. Phi family.

It catalyses the reaction RX + glutathione = an S-substituted glutathione + a halide anion + H(+). Functionally, conjugation of reduced glutathione to a wide number of exogenous and endogenous hydrophobic electrophiles. In plants, may have a detoxification role against certain herbicides. The protein is Glutathione S-transferase 1 of Populus euphratica (Euphrates poplar).